The following is a 302-amino-acid chain: MKSGASAASPTAKSFNFGSSRLLALAQQLRVYKPPLSSSFDEREELLAYKESTRKSITHVGFQESMAPVRFRPKKAAVLICLFEGDDGDLRVILTKRSSTLSTHSGEVSLPGGKAEEHDKDDGITATREAEEEIGLDPSLVDVVAFLEPFLSQHLLRVIPVVGILWDRKAFNPTPNPAEVEAVLDAPFEMFLKDENRRSEEFDWMGEKHLVHFFDYKTGDSDYVIWGLTARILIRAATVVYQRPPAFIEQKPNLKYSKMNQATRLYGWLKPLANLHESCENGRLLGHVPAYCLRYLVGISSR.

Residues 1-25 constitute a chloroplast transit peptide; the sequence is MKSGASAASPTAKSFNFGSSRLLAL. Residues 73 to 229 enclose the Nudix hydrolase domain; the sequence is PKKAAVLICL…DSDYVIWGLT (157 aa). The short motif at 114–135 is the Nudix box element; sequence KAEEHDKDDGITATREAEEEIG. Residues glutamate 129 and glutamate 133 each coordinate Mg(2+).

The protein belongs to the Nudix hydrolase family. Mg(2+) serves as cofactor. Requires Mn(2+) as cofactor. In terms of tissue distribution, expressed in roots, leaves, stems and inflorescences.

The protein localises to the plastid. Its subcellular location is the chloroplast. Functionally, probably mediates the hydrolysis of some nucleoside diphosphate derivatives. In Arabidopsis thaliana (Mouse-ear cress), this protein is Nudix hydrolase 22, chloroplastic (NUDT22).